The following is a 79-amino-acid chain: Sec-independent protein translocase protein TatA (79 aa).

A helical membrane pass occupies residues 1-21 (MFSGISIWQLLILLAIVVLLF). Composition is skewed to basic and acidic residues over residues 44 to 58 (MKDGEDEQDHKRLAD) and 66 to 79 (QDAEQKAEQEKDKA). Residues 44–79 (MKDGEDEQDHKRLADDDQPQNKQDAEQKAEQEKDKA) form a disordered region.

This sequence belongs to the TatA/E family. In terms of assembly, the Tat system comprises two distinct complexes: a TatABC complex, containing multiple copies of TatA, TatB and TatC subunits, and a separate TatA complex, containing only TatA subunits. Substrates initially bind to the TatABC complex, which probably triggers association of the separate TatA complex to form the active translocon.

It is found in the cell inner membrane. Functionally, part of the twin-arginine translocation (Tat) system that transports large folded proteins containing a characteristic twin-arginine motif in their signal peptide across membranes. TatA could form the protein-conducting channel of the Tat system. The chain is Sec-independent protein translocase protein TatA from Alcanivorax borkumensis (strain ATCC 700651 / DSM 11573 / NCIMB 13689 / SK2).